Reading from the N-terminus, the 325-residue chain is GTP 3',8-cyclase (325 aa).

The 220-residue stretch at 10–229 (GYGRRINYLR…PSLEKIKSED (220 aa)) folds into the Radical SAM core domain. Arg19 contributes to the GTP binding site. The [4Fe-4S] cluster site is built by Cys26 and Cys30. Residue Tyr32 participates in S-adenosyl-L-methionine binding. Residue Cys33 participates in [4Fe-4S] cluster binding. Arg69 lines the GTP pocket. Gly73 provides a ligand contact to S-adenosyl-L-methionine. Thr100 lines the GTP pocket. Ser124 serves as a coordination point for S-adenosyl-L-methionine. Lys161 contacts GTP. Met195 lines the S-adenosyl-L-methionine pocket. Cys257 and Cys260 together coordinate [4Fe-4S] cluster. 262–264 (RLR) serves as a coordination point for GTP. Residue Cys274 participates in [4Fe-4S] cluster binding.

The protein belongs to the radical SAM superfamily. MoaA family. As to quaternary structure, monomer and homodimer. Requires [4Fe-4S] cluster as cofactor.

The enzyme catalyses GTP + AH2 + S-adenosyl-L-methionine = (8S)-3',8-cyclo-7,8-dihydroguanosine 5'-triphosphate + 5'-deoxyadenosine + L-methionine + A + H(+). It functions in the pathway cofactor biosynthesis; molybdopterin biosynthesis. Functionally, catalyzes the cyclization of GTP to (8S)-3',8-cyclo-7,8-dihydroguanosine 5'-triphosphate. In Peptoclostridium acidaminophilum (Eubacterium acidaminophilum), this protein is GTP 3',8-cyclase.